The primary structure comprises 51 residues: MGQKWKLYIVKDGKVIRKNKFCPRCGPGVFMADHGDRWACGRCGYTEWKKK.

Zn(2+) contacts are provided by Cys22, Cys25, Cys40, and Cys43. Residues 22 to 43 (CPRCGPGVFMADHGDRWACGRC) form a C4-type zinc finger.

It belongs to the eukaryotic ribosomal protein eS31 family. Part of the 30S ribosomal subunit. It depends on Zn(2+) as a cofactor.

This Pyrococcus abyssi (strain GE5 / Orsay) protein is Small ribosomal subunit protein eS31.